Consider the following 354-residue polypeptide: tRNA N6-adenosine threonylcarbamoyltransferase (354 aa).

Fe cation-binding residues include His-111 and His-115. Substrate-binding positions include 134–138 (LVSGG), Asp-167, Gly-180, and Asn-279. Asp-319 lines the Fe cation pocket.

The protein belongs to the KAE1 / TsaD family. The cofactor is Fe(2+).

Its subcellular location is the cytoplasm. It carries out the reaction L-threonylcarbamoyladenylate + adenosine(37) in tRNA = N(6)-L-threonylcarbamoyladenosine(37) in tRNA + AMP + H(+). Its function is as follows. Required for the formation of a threonylcarbamoyl group on adenosine at position 37 (t(6)A37) in tRNAs that read codons beginning with adenine. Is involved in the transfer of the threonylcarbamoyl moiety of threonylcarbamoyl-AMP (TC-AMP) to the N6 group of A37, together with TsaE and TsaB. TsaD likely plays a direct catalytic role in this reaction. The protein is tRNA N6-adenosine threonylcarbamoyltransferase of Neisseria gonorrhoeae (strain ATCC 700825 / FA 1090).